A 152-amino-acid chain; its full sequence is uncharacterized protein (152 aa).

Topologically, residues 1-5 are cytoplasmic; that stretch reads MWFPQ. The helical transmembrane segment at 6–26 threads the bilayer; sequence IIAGMAAGGAASAMTPGKVLF. Residues 27 to 38 lie on the Extracellular side of the membrane; sequence TNALGLGCSRSR. A helical membrane pass occupies residues 39-59; it reads GLFLEMFGTAVLCLTVLMTAV. Topologically, residues 60–65 are cytoplasmic; that stretch reads EKRETN. Residues 66–86 traverse the membrane as a helical segment; that stretch reads FMAALPIGISLFMAHMALTGY. Over 87 to 110 the chain is Extracellular; it reads TGTGVNPARSLGAAVAARYFPHYH. Residues 92-94 carry the NPA motif; that stretch reads NPA. The helical transmembrane segment at 111–131 threads the bilayer; the sequence is WIYWISPLLGAFLAWSVWQLL. At 132–152 the chain is on the cytoplasmic side; sequence QILDYTTYVNAEKAAGQKKED.

It belongs to the MIP/aquaporin (TC 1.A.8) family.

The protein resides in the membrane. This is an uncharacterized protein from Saccharomyces cerevisiae (strain RM11-1a) (Baker's yeast).